The primary structure comprises 949 residues: Autophagy-related protein 9 (949 aa).

A disordered region spans residues 1 to 197 (MMTSNILSRF…GVKWSLGQPN (197 aa)). At 1–232 (MMTSNILSRF…EVYSYFLGNG (232 aa)) the chain is on the cytoplasmic side. Basic and acidic residues-rich tracts occupy residues 35 to 57 (VEERAGLTLEDGHGGHYTDHELQ), 75 to 85 (FLARESHHRVP), and 129 to 139 (EGHHDDEDLKS). The helical transmembrane segment at 233 to 253 (IWSILLTRVLSLLTFAFVVGF) threads the bilayer. Topologically, residues 254 to 289 (STFLTNCVNYHKVRGSKTLDDILVDRCTTKMSLSST) are lumenal. A helical transmembrane segment spans residues 290–310 (FLLWLLTFFWIGKAFQCLLGI). At 311–431 (RRLKHMHDFY…NLCIMDYVFN (121 aa)) the chain is on the cytoplasmic side. An intramembrane segment occupies 432–477 (EQGQVRTLFLKDTHRKALSEGLRRRFIFAGFMNIFVAPFIVVYFMM). Residues 478–542 (HYFFRYFNEY…DQFPKDKTVQ (65 aa)) are Cytoplasmic-facing. A helical transmembrane segment spans residues 543-563 (VAGFVAFVSGALASVLALASV). Topologically, residues 564–578 (VDPELFLGFEITHDR) are lumenal. The helical transmembrane segment at 579–599 (TVLFYLGVFGSVWAVARGMVP) threads the bilayer. The Cytoplasmic segment spans residues 600 to 645 (EETNVFDPEYALLEVINYTHYFPSQWKGRLHSDEVRREFAELYQMK). Residues 646–666 (IVIFLEEILSMIFTPFILWFS) lie within the membrane without spanning it. The Cytoplasmic segment spans residues 667 to 949 (LPRCSDRLID…DGRGRTAVGL (283 aa)). Residues 748-919 (GAHPSTKRQF…DAGAGGENAD (172 aa)) are disordered.

The protein belongs to the ATG9 family. As to quaternary structure, homotrimer; forms a homotrimer with a central pore that forms a path between the two membrane leaflets. In terms of processing, phosphorylated by atg1. Atg1 phosphorylation is required for preautophagosome elongation.

It localises to the preautophagosomal structure membrane. The protein resides in the cytoplasmic vesicle membrane. Its subcellular location is the golgi apparatus membrane. The protein localises to the endoplasmic reticulum membrane. The catalysed reaction is a 1,2-diacyl-sn-glycero-3-phosphocholine(in) = a 1,2-diacyl-sn-glycero-3-phosphocholine(out). It carries out the reaction a 1,2-diacyl-sn-glycero-3-phospho-L-serine(in) = a 1,2-diacyl-sn-glycero-3-phospho-L-serine(out). The enzyme catalyses a 1,2-diacyl-sn-glycero-3-phosphoethanolamine(in) = a 1,2-diacyl-sn-glycero-3-phosphoethanolamine(out). It catalyses the reaction a 1,2-diacyl-sn-glycero-3-phospho-(1D-myo-inositol-3-phosphate)(in) = a 1,2-diacyl-sn-glycero-3-phospho-(1D-myo-inositol-3-phosphate)(out). In terms of biological role, phospholipid scramblase involved in autophagy and cytoplasm to vacuole transport (Cvt) vesicle formation. Cycles between the preautophagosomal structure/phagophore assembly site (PAS) and the cytoplasmic vesicle pool and supplies membrane for the growing autophagosome. Lipid scramblase activity plays a key role in preautophagosomal structure/phagophore assembly by distributing the phospholipids that arrive through atg2 from the cytoplasmic to the luminal leaflet of the bilayer, thereby driving autophagosomal membrane expansion. Required for mitophagy. Also involved in endoplasmic reticulum-specific autophagic process and is essential for the survival of cells subjected to severe ER stress. Different machineries are required for anterograde trafficking to the PAS during either the Cvt pathway or bulk autophagy and for retrograde trafficking. The chain is Autophagy-related protein 9 (atg9) from Aspergillus clavatus (strain ATCC 1007 / CBS 513.65 / DSM 816 / NCTC 3887 / NRRL 1 / QM 1276 / 107).